Here is a 455-residue protein sequence, read N- to C-terminus: Bifunctional protein GlmU (455 aa).

The tract at residues 1–226 is pyrophosphorylase; that stretch reads MGLSVVILAA…EFEILGVNDR (226 aa). Residues 8–11, K22, Q73, 78–79, 99–101, G136, E151, N166, and N224 each bind UDP-N-acetyl-alpha-D-glucosamine; these read LAAG, GT, and YGD. D101 is a binding site for Mg(2+). N224 is a binding site for Mg(2+). The tract at residues 227-247 is linker; it reads TQLASLERVWQRNVAEKIMAK. The N-acetyltransferase stretch occupies residues 248 to 455; sequence GVSIADPNRF…WQRSVKKTDK (208 aa). Positions 330 and 348 each coordinate UDP-N-acetyl-alpha-D-glucosamine. Catalysis depends on H360, which acts as the Proton acceptor. UDP-N-acetyl-alpha-D-glucosamine contacts are provided by Y363 and N374. Residues A377, 383–384, S402, A420, and R437 contribute to the acetyl-CoA site; that span reads NY.

It in the N-terminal section; belongs to the N-acetylglucosamine-1-phosphate uridyltransferase family. The protein in the C-terminal section; belongs to the transferase hexapeptide repeat family. As to quaternary structure, homotrimer. Mg(2+) serves as cofactor.

It localises to the cytoplasm. The enzyme catalyses alpha-D-glucosamine 1-phosphate + acetyl-CoA = N-acetyl-alpha-D-glucosamine 1-phosphate + CoA + H(+). The catalysed reaction is N-acetyl-alpha-D-glucosamine 1-phosphate + UTP + H(+) = UDP-N-acetyl-alpha-D-glucosamine + diphosphate. The protein operates within nucleotide-sugar biosynthesis; UDP-N-acetyl-alpha-D-glucosamine biosynthesis; N-acetyl-alpha-D-glucosamine 1-phosphate from alpha-D-glucosamine 6-phosphate (route II): step 2/2. It functions in the pathway nucleotide-sugar biosynthesis; UDP-N-acetyl-alpha-D-glucosamine biosynthesis; UDP-N-acetyl-alpha-D-glucosamine from N-acetyl-alpha-D-glucosamine 1-phosphate: step 1/1. It participates in bacterial outer membrane biogenesis; LPS lipid A biosynthesis. Functionally, catalyzes the last two sequential reactions in the de novo biosynthetic pathway for UDP-N-acetylglucosamine (UDP-GlcNAc). The C-terminal domain catalyzes the transfer of acetyl group from acetyl coenzyme A to glucosamine-1-phosphate (GlcN-1-P) to produce N-acetylglucosamine-1-phosphate (GlcNAc-1-P), which is converted into UDP-GlcNAc by the transfer of uridine 5-monophosphate (from uridine 5-triphosphate), a reaction catalyzed by the N-terminal domain. The polypeptide is Bifunctional protein GlmU (Francisella tularensis subsp. tularensis (strain FSC 198)).